Reading from the N-terminus, the 433-residue chain is Glutamate-1-semialdehyde 2,1-aminomutase (433 aa).

N6-(pyridoxal phosphate)lysine is present on lysine 271.

It belongs to the class-III pyridoxal-phosphate-dependent aminotransferase family. HemL subfamily. Homodimer. Requires pyridoxal 5'-phosphate as cofactor.

The protein resides in the cytoplasm. It catalyses the reaction (S)-4-amino-5-oxopentanoate = 5-aminolevulinate. Its pathway is porphyrin-containing compound metabolism; protoporphyrin-IX biosynthesis; 5-aminolevulinate from L-glutamyl-tRNA(Glu): step 2/2. It functions in the pathway porphyrin-containing compound metabolism; chlorophyll biosynthesis. This chain is Glutamate-1-semialdehyde 2,1-aminomutase, found in Prochlorococcus marinus (strain MIT 9301).